The sequence spans 447 residues: Tubulin beta chain (447 aa).

Q11, E69, S138, G142, T143, G144, N204, and N226 together coordinate GTP. Residue E69 coordinates Mg(2+). The disordered stretch occupies residues 424–447; the sequence is QYQEARSTDSDEYDNEEYYNQQEE. Residues 433-447 show a composition bias toward acidic residues; that stretch reads SDEYDNEEYYNQQEE.

It belongs to the tubulin family. Dimer of alpha and beta chains. A typical microtubule is a hollow water-filled tube with an outer diameter of 25 nm and an inner diameter of 15 nM. Alpha-beta heterodimers associate head-to-tail to form protofilaments running lengthwise along the microtubule wall with the beta-tubulin subunit facing the microtubule plus end conferring a structural polarity. Microtubules usually have 13 protofilaments but different protofilament numbers can be found in some organisms and specialized cells. The cofactor is Mg(2+). Lens specific.

It localises to the cytoplasm. The protein resides in the cytoskeleton. Its function is as follows. Tubulin is the major constituent of microtubules, a cylinder consisting of laterally associated linear protofilaments composed of alpha- and beta-tubulin heterodimers. Microtubules grow by the addition of GTP-tubulin dimers to the microtubule end, where a stabilizing cap forms. Below the cap, tubulin dimers are in GDP-bound state, owing to GTPase activity of alpha-tubulin. The protein is Tubulin beta chain of Enteroctopus dofleini (North Pacific giant octopus).